The chain runs to 261 residues: Ribosome biogenesis protein C3_06160C_A (261 aa).

The disordered stretch occupies residues 1–38 (MPQNEYIEQHIKKHGRRLDYEERKRKKEAREGHRVAKD). 2 short sequence motifs (nuclear localization signal) span residues 11 to 18 (IKKHGRRL) and 51 to 58 (AKKRYAEK). The span at 17 to 37 (RLDYEERKRKKEAREGHRVAK) shows a compositional bias: basic and acidic residues. The interval 59–85 (VAMKKKIKAHQESKVKGPSTPKAEDGE) is disordered.

The protein belongs to the eukaryotic ribosomal protein eS8 family. Ribosome biogenesis protein NSA2 subfamily. Component of the pre-66S ribosomal particle. Interacts with NOP7 and RRP1. Interacts with RSA4 (via WD repeats).

It localises to the nucleus. Its subcellular location is the nucleolus. Involved in the biogenesis of the 60S ribosomal subunit. May play a part in the quality control of pre-60S particles. This Candida albicans (strain SC5314 / ATCC MYA-2876) (Yeast) protein is Ribosome biogenesis protein C3_06160C_A.